A 475-amino-acid polypeptide reads, in one-letter code: 3-isopropylmalate dehydratase large subunit (475 aa).

[4Fe-4S] cluster is bound by residues Cys-349, Cys-409, and Cys-412.

This sequence belongs to the aconitase/IPM isomerase family. LeuC type 1 subfamily. Heterodimer of LeuC and LeuD. The cofactor is [4Fe-4S] cluster.

It carries out the reaction (2R,3S)-3-isopropylmalate = (2S)-2-isopropylmalate. Its pathway is amino-acid biosynthesis; L-leucine biosynthesis; L-leucine from 3-methyl-2-oxobutanoate: step 2/4. Catalyzes the isomerization between 2-isopropylmalate and 3-isopropylmalate, via the formation of 2-isopropylmaleate. This is 3-isopropylmalate dehydratase large subunit from Cereibacter sphaeroides (strain KD131 / KCTC 12085) (Rhodobacter sphaeroides).